The following is a 272-amino-acid chain: Homeobox protein Hox-D12 (272 aa).

Residues 204-263 (SRRKRKPYTKQQIAELENEFLANEFINRQKRKELSDRLNLSDQQVKIWFQNRRMKKKRLV) constitute a DNA-binding region (homeobox).

It belongs to the Abd-B homeobox family.

It is found in the nucleus. In terms of biological role, sequence-specific transcription factor which is part of a developmental regulatory system that provides cells with specific positional identities on the anterior-posterior axis. The sequence is that of Homeobox protein Hox-D12 (HOXD12) from Heterodontus francisci (Horn shark).